Consider the following 720-residue polypeptide: ATP-dependent RNA helicase glh-3 (720 aa).

The segment covering Met1–Arg11 has biased composition (polar residues). Disordered regions lie at residues Met1–Lys34 and Leu125–Asn180. 2 stretches are compositionally biased toward basic and acidic residues: residues Asn141–Asp154 and Ser162–Ser172. 2 consecutive CCHC-type zinc fingers follow at residues Asn202–Ala219 and Arg222–Ser239. A Q motif motif is present at residues Lys298–Gln326. The region spanning Leu329–Met513 is the Helicase ATP-binding domain. Ala342–Thr349 is a binding site for ATP. A DEAD box motif is present at residues Asp456–Asp459. One can recognise a Helicase C-terminal domain in the interval Asp549–Ala698. Positions Glu696–Trp720 are disordered.

The protein belongs to the DEAD box helicase family. DDX4/VASA subfamily. As to quaternary structure, interacts with csn-5. Interacts (via C-terminus) with kgb-1. Interacts with zyx-1.

The protein resides in the cytoplasm. The enzyme catalyses ATP + H2O = ADP + phosphate + H(+). Probable ATP-binding RNA helicase. This is ATP-dependent RNA helicase glh-3 from Caenorhabditis elegans.